Consider the following 109-residue polypeptide: MQQFEWWHAAFLFLAVVLDILANILLKLSNGFRRPWMGILSLIAVLGAFSALAQAVKGIELSIAYALWGAFGIIATVAAGWIMFNQRLNYKGWGGIALLLLGMVMIKMA.

The next 4 helical transmembrane spans lie at W6–L26, W36–V56, I63–M83, and L88–M108.

This sequence belongs to the drug/metabolite transporter (DMT) superfamily. Small multidrug resistance (SMR) (TC 2.A.7.1) family. MdtI subfamily. Forms a complex with MdtJ.

It is found in the cell inner membrane. In terms of biological role, catalyzes the excretion of spermidine. This is Spermidine export protein MdtI from Photorhabdus laumondii subsp. laumondii (strain DSM 15139 / CIP 105565 / TT01) (Photorhabdus luminescens subsp. laumondii).